A 314-amino-acid polypeptide reads, in one-letter code: CBASS oligonucleotide cyclase CdnC (314 aa).

Residue Lys60 coordinates ATP. Positions 73 and 75 each coordinate Mg(2+). ATP contacts are provided by residues Asp75, Lys186, Lys197–Phe199, and Asn263.

It belongs to the CD-NTase family. C01 subfamily. As to quaternary structure, forms complexes with Cap7 with 1:1 and 2:2 stoichimetry, and a 1:1:6 CdnC:Cap7:Cap6 complex. Mg(2+) is required as a cofactor.

Functionally, cyclic nucleotide synthase (second messenger synthase) of a CBASS antivirus system. CBASS (cyclic oligonucleotide-based antiphage signaling system) provides immunity against bacteriophage. The CD-NTase protein synthesizes cyclic nucleotides in response to infection; these serve as specific second messenger signals. The signals activate a diverse range of effectors, leading to bacterial cell death and thus abortive phage infection. A type III CBASS system. Expression of this CBASS system (Cap18-Cap6-Cap7-CdnC-CapW-Cap17) in a susceptible E.coli (strain MG1655) confers resistance to bacteriophage P1. Probable cyclic nucleotide synthase that upon activation catalyzes the synthesis of a cyclic nucleotide. A cyclase activity for this enzyme was not identified in. In Escherichia coli (strain KTE188), this protein is CBASS oligonucleotide cyclase CdnC.